The primary structure comprises 243 residues: Nuclear protein UL4 homolog (243 aa).

The disordered stretch occupies residues 193–226 (RPDDQTTPTPTPHQYTSQRRQPETNCPSPQPAFF). Positions 205 to 219 (HQYTSQRRQPETNCP) are enriched in polar residues.

This sequence belongs to the alphaherpesvirinae HHV-1 UL4 family.

The protein resides in the host nucleus. This is Nuclear protein UL4 homolog from Varicella-zoster virus (strain Oka vaccine) (HHV-3).